Reading from the N-terminus, the 242-residue chain is Adenosine 5'-phosphosulfate reductase (242 aa).

Cys-125, Cys-126, Cys-208, and Cys-211 together coordinate [4Fe-4S] cluster. The Nucleophile; cysteine thiosulfonate intermediate role is filled by Cys-234.

This sequence belongs to the PAPS reductase family. CysH subfamily. Requires [4Fe-4S] cluster as cofactor.

The protein resides in the cytoplasm. The enzyme catalyses [thioredoxin]-disulfide + sulfite + AMP + 2 H(+) = adenosine 5'-phosphosulfate + [thioredoxin]-dithiol. It participates in sulfur metabolism; hydrogen sulfide biosynthesis; sulfite from sulfate. Functionally, catalyzes the formation of sulfite from adenosine 5'-phosphosulfate (APS) using thioredoxin as an electron donor. This Staphylococcus saprophyticus subsp. saprophyticus (strain ATCC 15305 / DSM 20229 / NCIMB 8711 / NCTC 7292 / S-41) protein is Adenosine 5'-phosphosulfate reductase.